We begin with the raw amino-acid sequence, 548 residues long: Non-structural protein NS1 (548 aa).

Belongs to the orbivirus non-structural protein NS1 family.

In Camelus dromedarius (Dromedary), this protein is Non-structural protein NS1 (Segment-5).